A 396-amino-acid polypeptide reads, in one-letter code: Phosphoglycerate kinase (396 aa).

Residues 21–23 (DFN), Arg36, 59–62 (HLGK), Arg119, and Arg156 contribute to the substrate site. ATP-binding positions include Lys206, Gly294, Glu325, and 352–355 (GGDS).

The protein belongs to the phosphoglycerate kinase family. As to quaternary structure, monomer.

The protein resides in the cytoplasm. The enzyme catalyses (2R)-3-phosphoglycerate + ATP = (2R)-3-phospho-glyceroyl phosphate + ADP. Its pathway is carbohydrate degradation; glycolysis; pyruvate from D-glyceraldehyde 3-phosphate: step 2/5. The protein is Phosphoglycerate kinase of Staphylococcus aureus (strain USA300).